The chain runs to 355 residues: Carbohydrate sulfotransferase 10 (355 aa).

Topologically, residues 1 to 6 (MHHRWL) are cytoplasmic. A helical; Signal-anchor for type II membrane protein transmembrane segment spans residues 7 to 27 (LLVACFWVLFMLMVASKLITL). Residues 28 to 355 (TMKDPEGYGN…FGYKEPTFLF (328 aa)) lie on the Lumenal side of the membrane. Asparagine 93 and asparagine 98 each carry an N-linked (GlcNAc...) asparagine glycan. 3'-phosphoadenylyl sulfate is bound by residues 126–132 (PKVGNTQ) and 188–196 (RDPFERLIS). Asparagine 316 carries an N-linked (GlcNAc...) asparagine glycan.

It belongs to the sulfotransferase 2 family.

Its subcellular location is the golgi apparatus membrane. Catalyzes the transfer of sulfate to position 3 of terminal glucuronic acid of both protein- and lipid-linked oligosaccharides. Participates in biosynthesis of HNK-1 carbohydrate structure, a sulfated glucuronyl-lactosaminyl residue carried by many neural recognition molecules. In Xenopus laevis (African clawed frog), this protein is Carbohydrate sulfotransferase 10 (chst10).